We begin with the raw amino-acid sequence, 245 residues long: 1-(5-phosphoribosyl)-5-[(5-phosphoribosylamino)methylideneamino] imidazole-4-carboxamide isomerase (245 aa).

Asp8 (proton acceptor) is an active-site residue. Catalysis depends on Asp129, which acts as the Proton donor.

It belongs to the HisA/HisF family.

The protein localises to the cytoplasm. It carries out the reaction 1-(5-phospho-beta-D-ribosyl)-5-[(5-phospho-beta-D-ribosylamino)methylideneamino]imidazole-4-carboxamide = 5-[(5-phospho-1-deoxy-D-ribulos-1-ylimino)methylamino]-1-(5-phospho-beta-D-ribosyl)imidazole-4-carboxamide. It functions in the pathway amino-acid biosynthesis; L-histidine biosynthesis; L-histidine from 5-phospho-alpha-D-ribose 1-diphosphate: step 4/9. The chain is 1-(5-phosphoribosyl)-5-[(5-phosphoribosylamino)methylideneamino] imidazole-4-carboxamide isomerase from Rhodopseudomonas palustris (strain BisA53).